The primary structure comprises 856 residues: Translation initiation factor IF-2 (856 aa).

The tr-type G domain maps to 356–526 (PRAPVVTVMG…LLIADLLELK (171 aa)). A G1 region spans residues 365 to 372 (GHVDHGKT). 365-372 (GHVDHGKT) contacts GTP. The segment at 390 to 394 (GITQH) is G2. The segment at 412-415 (DTPG) is G3. Residues 412–416 (DTPGH) and 466–469 (NKID) contribute to the GTP site. The tract at residues 466–469 (NKID) is G4. Residues 502 to 504 (SAK) are G5.

The protein belongs to the TRAFAC class translation factor GTPase superfamily. Classic translation factor GTPase family. IF-2 subfamily.

Its subcellular location is the cytoplasm. Its function is as follows. One of the essential components for the initiation of protein synthesis. Protects formylmethionyl-tRNA from spontaneous hydrolysis and promotes its binding to the 30S ribosomal subunits. Also involved in the hydrolysis of GTP during the formation of the 70S ribosomal complex. The protein is Translation initiation factor IF-2 of Ehrlichia ruminantium (strain Gardel).